The following is a 449-amino-acid chain: tRNA (guanine(37)-N(1))-methyltransferase (449 aa).

Residues histidine 216, 254–255, 282–283, and asparagine 345 each bind S-adenosyl-L-methionine; these read DL and DG.

Belongs to the class I-like SAM-binding methyltransferase superfamily. TRM5/TYW2 family. In terms of assembly, monomer.

It localises to the mitochondrion matrix. The protein localises to the nucleus. Its subcellular location is the cytoplasm. The enzyme catalyses guanosine(37) in tRNA + S-adenosyl-L-methionine = N(1)-methylguanosine(37) in tRNA + S-adenosyl-L-homocysteine + H(+). Functionally, specifically methylates the N1 position of guanosine-37 in various cytoplasmic and mitochondrial tRNAs. Methylation is not dependent on the nature of the nucleoside 5' of the target nucleoside. This is the first step in the biosynthesis of wybutosine (yW), a modified base adjacent to the anticodon of tRNAs and required for accurate decoding. This is tRNA (guanine(37)-N(1))-methyltransferase from Candida albicans (strain WO-1) (Yeast).